The sequence spans 750 residues: MLRAKNQLFLLSPHYLKQVKESSGSRLIQQRLLHQQQPLHPEWAALAKKQLKGKNPEDLIWHTPEGISIKPLYSKRDTMDLPEELPGVKPFTRGPYPTMYTFRPWTIRQYAGFSTVEESNKFYKDNIKAGQQGLSVAFDLATHRGYDSDNPRVRGDVGMAGVAIDTVEDTKILFDGIPLEKMSVSMTMNGAVIPVLANFIVTGEEQGVPKEKLTGTIQNDILKEFMVRNTYIFPPEPSMKIIADIFEYTAKHMPKFNSISISGYHMQEAGADAILELAYTLADGLEYSRTGLQAGLTIDEFAPRLSFFWGIGMNFYMEITKMRAGRRLWAHLIEKMFQPKNSKSLLLRAHCQTSGWSLTEQDPYNNIVRTAIEAMAAVFGGTQSLHTNSFDEALGLPTVKSARIARNTQIIIQEESGIPKVADPWGGSYMMECLTNDVYDAALKLINEIEEMGGMAKAVAEGIPKLRIEECAARRQARIDSGSEVIVGVNKYQLEKEDAVEVLAIDNTSVRNRQIEKLKKIKSSRDQALAERCLAALTECAASGDGNILALAVDASRARCTVGEITDALKKVFGEHKANDRMVSGAYRQEFGESKEITSAIKRVHKFMEREGRRPRLLVAKMGQDGHDRGAKVIATGFADLGFDVDIGPLFQTPREVAQQAVDADVHAVGVSTLAAGHKTLVPELIKELNSLGRPDILVMCGGVIPPQDYEFLFEVGVSNVFGPGTRIPKAAVQVLDDIEKCLEKKQQSV.

A mitochondrion-targeting transit peptide spans 1–32 (MLRAKNQLFLLSPHYLKQVKESSGSRLIQQRL). Residue Gln50 participates in malonyl-CoA binding. N6-acetyllysine is present on Lys89. Residues 96-99 (YPTM) and 106-110 (TIRQY) contribute to the malonyl-CoA site. The residue at position 212 (Lys212) is an N6-acetyllysine. Residues 216–218 (TIQ), Arg228, Lys255, His265, and 304–306 (RLS) contribute to the malonyl-CoA site. Lys335 is modified (N6-acetyllysine). The residue at position 343 (Lys343) is an N6-succinyllysine. Position 481 is a phosphoserine (Ser481). Lys595 carries the post-translational modification N6-succinyllysine. Position 602 is an N6-acetyllysine (Lys602). The region spanning 614–746 (RPRLLVAKMG…DDIEKCLEKK (133 aa)) is the B12-binding domain. An adenosylcob(III)alamin-binding site is contributed by His627.

The protein belongs to the methylmalonyl-CoA mutase family. In terms of assembly, homodimer. Interacts (the apoenzyme form) with MMAA; the interaction is GTP dependent. The cofactor is adenosylcob(III)alamin.

Its subcellular location is the mitochondrion matrix. The protein localises to the mitochondrion. It localises to the cytoplasm. The catalysed reaction is (R)-methylmalonyl-CoA = succinyl-CoA. With respect to regulation, inhibited by itaconyl-CoA, a metabolite that inactivates the coenzyme B12 cofactor. Its function is as follows. Catalyzes the reversible isomerization of methylmalonyl-CoA (MMCoA) (generated from branched-chain amino acid metabolism and degradation of dietary odd chain fatty acids and cholesterol) to succinyl-CoA (3-carboxypropionyl-CoA), a key intermediate of the tricarboxylic acid cycle. In Pongo abelii (Sumatran orangutan), this protein is Methylmalonyl-CoA mutase, mitochondrial (MMUT).